A 229-amino-acid polypeptide reads, in one-letter code: Cytochrome b translational activator protein CBS1, mitochondrial (229 aa).

The transit peptide at 1–25 directs the protein to the mitochondrion; the sequence is MLRTKVFATTVARISGIRRYIPIRT.

The protein resides in the mitochondrion inner membrane. Its function is as follows. mRNA-specific translational activator of cytochrome b. The cytochrome b (COB) leader RNA may represent the target sequence for CBS1 and CBS2, tethering the COB mRNA to the inner mitochondrial membrane, where cotranslational insertion of cytochrome b into the membrane can occur. The protein is Cytochrome b translational activator protein CBS1, mitochondrial (CBS1) of Saccharomyces cerevisiae (strain ATCC 204508 / S288c) (Baker's yeast).